Here is a 50-residue protein sequence, read N- to C-terminus: Cytochrome c-555 (50 aa).

Heme-binding residues include Cys7, Cys10, His11, and Met25.

Post-translationally, binds 1 heme group per subunit.

Its subcellular location is the cell membrane. This chain is Cytochrome c-555, found in Schinkia azotoformans (Bacillus azotoformans).